The sequence spans 479 residues: Alpha,alpha-trehalose-phosphate synthase [UDP-forming] 2 (479 aa).

D-glucose 6-phosphate is bound by residues Tyr96 and Asp150. 2 residues coordinate UDP: Arg287 and Lys292. The UDP-alpha-D-glucose site is built by Arg287 and Lys292. A D-glucose 6-phosphate-binding site is contributed by Arg325. Residues 363–364 (SV) and 390–394 (LVSFE) each bind UDP. A UDP-alpha-D-glucose-binding site is contributed by 386–394 (DGMNLVSFE).

Belongs to the glycosyltransferase 20 family.

The enzyme catalyses D-glucose 6-phosphate + UDP-alpha-D-glucose = alpha,alpha-trehalose 6-phosphate + UDP + H(+). It functions in the pathway carbohydrate biosynthesis. Its function is as follows. Synthase catalytic subunit of the trehalose synthase complex that catalyzes the production of trehalose from glucose-6-phosphate and UDP-alpha-D-glucose in a two step process. The disaccharide trehalose serves as a storage carbohydrate that is mobilized during conidial germination. Regulates the level of trehalose as a protectant for cell integrity during thermal and oxidative stress. In Aspergillus fumigatus (strain ATCC MYA-4609 / CBS 101355 / FGSC A1100 / Af293) (Neosartorya fumigata), this protein is Alpha,alpha-trehalose-phosphate synthase [UDP-forming] 2.